A 207-amino-acid chain; its full sequence is MEMSAQRLASNRTSPQSPSNSDYTWEYEYYEIGPVSFEGLKAHKYSIVIGFWVGLAVFVIFMFFVLTLLTKTGAPHQDNAESSERRFRMNSFVSDFGKPLESDKVFSRQGNEESRSLFHCYINEVEHLDRVKVCHQTTAIDSDVHLQEASRSSGRPEEELARFMKFDIPNFVNTEQSSFGEDDLLISEAPVLLENKPVSQTSRIDLD.

Residues 1-21 are disordered; that stretch reads MEMSAQRLASNRTSPQSPSNS. Residues 7 to 21 are compositionally biased toward polar residues; that stretch reads RLASNRTSPQSPSNS. Asparagine 11 carries N-linked (GlcNAc...) asparagine glycosylation. The chain crosses the membrane as a helical span at residues 47-67; it reads IVIGFWVGLAVFVIFMFFVLT. Serine 91 carries the phosphoserine modification.

This sequence belongs to the MRAP family. As to quaternary structure, homodimer and heterodimer. Forms antiparallel homodimers and heterodimers with MRAP. Interacts with MC1R, MC2R, MC3R and MC5R. Interacts with MC4R. In terms of tissue distribution, predominantly expressed in the brain, mainly in the pons and cerebellum but also in regions involved in energy homeostasis, such as the hypothalamus and brainstem.

It is found in the cell membrane. The protein localises to the endoplasmic reticulum membrane. Its function is as follows. Modulator of melanocortin receptor 4 (MC4R), a receptor involved in energy homeostasis. Plays a central role in the control of energy homeostasis and body weight regulation by increasing ligand-sensitivity of MC4R and MC4R-mediated generation of cAMP. May also act as a negative regulator of MC2R: competes with MRAP for binding to MC2R and impairs the binding of corticotropin (ACTH) to MC2R. May also regulate activity of other melanocortin receptors (MC1R, MC3R and MC5R); however, additional evidence is required in vivo. The protein is Melanocortin-2 receptor accessory protein 2 (Mrap2) of Mus musculus (Mouse).